Here is a 984-residue protein sequence, read N- to C-terminus: Rhoptry neck protein 4 (984 aa).

An N-terminal signal peptide occupies residues 1 to 26 (MAIKNTLTGSGLLVLLTLACGTTVQS). The interval 24-300 (VQSSPPTPAP…TPIPASKGIY (277 aa)) is disordered. 2 stretches are compositionally biased toward polar residues: residues 66–85 (PQKT…NSKV) and 92–105 (SDTT…TSES). Asn-81 is a glycosylation site (N-linked (GlcNAc...) asparagine). The segment covering 106-117 (PPVPQLGTPPRP) has biased composition (pro residues). Repeat unit 1 spans residues 129 to 172 (QPPTAAPRTSRSVDTGSGSDASTEQQAGGQKVVTPIPASKGIYP). A compositionally biased stretch (polar residues) spans 135–156 (PRTSRSVDTGSGSDASTEQQAG). Basic residues predominate over residues 214–228 (TGRRRAKARNRKRHP). A compositionally biased stretch (polar residues) spans 242 to 285 (QPPTTASRPSNGEGESQPPTAAPRTSRSVDTGSGSDASTEQQAG). Residues 258-301 (QPPTAAPRTSRSVDTGSGSDASTEQQAGGQKVVTPIPASKGIYP) form repeat 2. 2 N-linked (GlcNAc...) asparagine glycosylation sites follow: Asn-390 and Asn-780. The interval 882–984 (GPTVSDESRR…EESTSKTSEL (103 aa)) is disordered. Residues 892–901 (MIHPVRHRSR) are compositionally biased toward basic residues. A compositionally biased stretch (low complexity) spans 902–914 (TAPSSEAASTAAE). The N-linked (GlcNAc...) asparagine glycan is linked to Asn-925. The segment covering 967–984 (LKQSDTLIEESTSKTSEL) has biased composition (polar residues).

It is found in the secreted. The protein resides in the parasitophorous vacuole membrane. This is Rhoptry neck protein 4 (RON4) from Toxoplasma gondii.